Reading from the N-terminus, the 512-residue chain is Maturase K (512 aa).

The protein belongs to the intron maturase 2 family. MatK subfamily.

The protein resides in the plastid. The protein localises to the chloroplast. In terms of biological role, usually encoded in the trnK tRNA gene intron. Probably assists in splicing its own and other chloroplast group II introns. In Amorphophallus paeoniifolius (Whitespot giant arum), this protein is Maturase K.